The primary structure comprises 210 residues: 3-hexulose-6-phosphate synthase (210 aa).

The protein belongs to the HPS/KGPDC family. HPS subfamily.

The catalysed reaction is D-ribulose 5-phosphate + formaldehyde = D-arabino-hex-3-ulose 6-phosphate. Its pathway is one-carbon metabolism; formaldehyde assimilation via RuMP pathway; D-fructose 6-phosphate from D-ribulose 5-phosphate and formaldehyde: step 1/2. Its function is as follows. Catalyzes the condensation of ribulose 5-phosphate with formaldehyde to form 3-hexulose 6-phosphate. Together with HxlB, may act as a formaldehyde detoxification system. In Bacillus subtilis (strain 168), this protein is 3-hexulose-6-phosphate synthase (hxlA).